The sequence spans 233 residues: H-2 class II histocompatibility antigen, A-R alpha chain (233 aa).

Residues 1 to 88 (EDDIEADHVG…KRSNFTPAAN (88 aa)) form an alpha-1 region. The Extracellular segment spans residues 1-195 (EDDIEADHVG…IPAPMSELTE (195 aa)). Residues 89–182 (EAPQATVFPK…GLEEPVLKHW (94 aa)) are alpha-2. An Ig-like C1-type domain is found at 91-183 (PQATVFPKSP…LEEPVLKHWE (93 aa)). A disulfide bridge links Cys111 with Cys167. N-linked (GlcNAc...) asparagine glycosylation is present at Asn122. The connecting peptide stretch occupies residues 183–195 (EPEIPAPMSELTE). A helical membrane pass occupies residues 196–221 (TVVCALGLSVGLVGIVVGTIFIIQGL). The Cytoplasmic portion of the chain corresponds to 222–233 (RSGGTSRHPGPL).

Belongs to the MHC class II family.

The protein resides in the membrane. This is H-2 class II histocompatibility antigen, A-R alpha chain (H2-Aa) from Mus musculus (Mouse).